Here is a 791-residue protein sequence, read N- to C-terminus: Ubiquitin carboxyl-terminal hydrolase 10-A (791 aa).

Composition is skewed to polar residues over residues 118–139 (FSES…SGTG) and 270–284 (DTTE…QTLE). 2 disordered regions span residues 118-156 (FSES…YYSY) and 270-291 (DTTE…EDTA). The 381-residue stretch at 408 to 788 (RGLINKGNWC…TAYLLYYRRV (381 aa)) folds into the USP domain. The active-site Nucleophile is cysteine 417. A disordered region spans residues 560–580 (EVNKEEQEGSDEEWEQVGPRN). Histidine 742 functions as the Proton acceptor in the catalytic mechanism.

This sequence belongs to the peptidase C19 family. USP10 subfamily.

Its subcellular location is the cytoplasm. The protein localises to the nucleus. It carries out the reaction Thiol-dependent hydrolysis of ester, thioester, amide, peptide and isopeptide bonds formed by the C-terminal Gly of ubiquitin (a 76-residue protein attached to proteins as an intracellular targeting signal).. Its function is as follows. Hydrolase that can remove conjugated ubiquitin from target proteins such as p53/tp53, rps2/us5, rps3/us3, rps10/eS10, becn1, snx3 and cftr. Acts as an essential regulator of p53/tp53 stability: in unstressed cells, specifically deubiquitinates p53/tp53 in the cytoplasm, leading to counteracts MDM2 action and stabilize p53/tp53. Following DNA damage, translocates to the nucleus and deubiquitinates p53/tp53, leading to regulate the p53/TP53-dependent DNA damage response. Component of a regulatory loop that controls autophagy and p53/tp53 levels. Plays a key role in 40S ribosome subunit recycling when a ribosome has stalled during translation: acts both by inhibiting formation of stress granules, which store stalled translation pre-initiation complexes, and mediating deubiquitination of 40S ribosome subunits. Deubiquitinates cftr in early endosomes, enhancing its endocytic recycling. In Xenopus laevis (African clawed frog), this protein is Ubiquitin carboxyl-terminal hydrolase 10-A (usp10-a).